Here is a 65-residue protein sequence, read N- to C-terminus: Neurotoxin Bot2 (65 aa).

Residues 2–64 (RDAYIAQPEN…VPIRIEGKCH (63 aa)) form the LCN-type CS-alpha/beta domain. 4 disulfides stabilise this stretch: cysteine 12/cysteine 63, cysteine 16/cysteine 36, cysteine 22/cysteine 46, and cysteine 26/cysteine 48. Phenylalanine 65 carries the phenylalanine amide modification.

The protein belongs to the long (4 C-C) scorpion toxin superfamily. Sodium channel inhibitor family. Alpha subfamily. In terms of tissue distribution, expressed by the venom gland.

It is found in the secreted. Its function is as follows. Binds to sodium channels (Nav) and inhibits the inactivation of the activated channels, thereby blocking neuronal transmission. The protein is Neurotoxin Bot2 of Buthus occitanus tunetanus (Common European scorpion).